Reading from the N-terminus, the 103-residue chain is UPF0145 protein BC_1816 (103 aa).

This sequence belongs to the UPF0145 family.

In Bacillus cereus (strain ATCC 14579 / DSM 31 / CCUG 7414 / JCM 2152 / NBRC 15305 / NCIMB 9373 / NCTC 2599 / NRRL B-3711), this protein is UPF0145 protein BC_1816.